A 278-amino-acid polypeptide reads, in one-letter code: Toxin coregulated pilus biosynthesis protein D (278 aa).

A helical membrane pass occupies residues 30–50 (LLVAIIFLVLSILGGGAYLYY).

Its subcellular location is the cell membrane. Functionally, involved in TCP pilus biogenesis. The chain is Toxin coregulated pilus biosynthesis protein D (tcpD) from Vibrio cholerae serotype O1 (strain ATCC 39315 / El Tor Inaba N16961).